We begin with the raw amino-acid sequence, 275 residues long: Probable dual specificity protein phosphatase DDB_G0271350 (275 aa).

The region spanning 2-143 is the Tyrosine-protein phosphatase domain; that stretch reads GISMILDNFL…LCDLELKLTN (142 aa). Catalysis depends on Cys87, which acts as the Phosphocysteine intermediate.

This sequence belongs to the protein-tyrosine phosphatase family. Non-receptor class dual specificity subfamily.

It catalyses the reaction O-phospho-L-tyrosyl-[protein] + H2O = L-tyrosyl-[protein] + phosphate. The catalysed reaction is O-phospho-L-seryl-[protein] + H2O = L-seryl-[protein] + phosphate. The enzyme catalyses O-phospho-L-threonyl-[protein] + H2O = L-threonyl-[protein] + phosphate. Its function is as follows. Has a dual specificity toward Ser/Thr and Tyr-containing proteins. The protein is Probable dual specificity protein phosphatase DDB_G0271350 of Dictyostelium discoideum (Social amoeba).